We begin with the raw amino-acid sequence, 427 residues long: Serine hydroxymethyltransferase (427 aa).

Residues Leu122 and 126–128 each bind (6S)-5,6,7,8-tetrahydrofolate; that span reads GHL. Position 231 is an N6-(pyridoxal phosphate)lysine (Lys231). (6S)-5,6,7,8-tetrahydrofolate contacts are provided by residues Glu247 and 355–357; that span reads SPF.

This sequence belongs to the SHMT family. In terms of assembly, homodimer. Pyridoxal 5'-phosphate is required as a cofactor.

It is found in the cytoplasm. It catalyses the reaction (6R)-5,10-methylene-5,6,7,8-tetrahydrofolate + glycine + H2O = (6S)-5,6,7,8-tetrahydrofolate + L-serine. The protein operates within one-carbon metabolism; tetrahydrofolate interconversion. Its pathway is amino-acid biosynthesis; glycine biosynthesis; glycine from L-serine: step 1/1. In terms of biological role, catalyzes the reversible interconversion of serine and glycine with tetrahydrofolate (THF) serving as the one-carbon carrier. This reaction serves as the major source of one-carbon groups required for the biosynthesis of purines, thymidylate, methionine, and other important biomolecules. Also exhibits THF-independent aldolase activity toward beta-hydroxyamino acids, producing glycine and aldehydes, via a retro-aldol mechanism. The chain is Serine hydroxymethyltransferase from Synechocystis sp. (strain ATCC 27184 / PCC 6803 / Kazusa).